Here is a 451-residue protein sequence, read N- to C-terminus: Phosphoglucosamine mutase (451 aa).

Ser102 acts as the Phosphoserine intermediate in catalysis. Positions 102, 242, 244, and 246 each coordinate Mg(2+). Ser102 is modified (phosphoserine).

The protein belongs to the phosphohexose mutase family. The cofactor is Mg(2+). Activated by phosphorylation.

The enzyme catalyses alpha-D-glucosamine 1-phosphate = D-glucosamine 6-phosphate. Its function is as follows. Catalyzes the conversion of glucosamine-6-phosphate to glucosamine-1-phosphate. This Staphylococcus epidermidis (strain ATCC 35984 / DSM 28319 / BCRC 17069 / CCUG 31568 / BM 3577 / RP62A) protein is Phosphoglucosamine mutase.